An 83-amino-acid chain; its full sequence is MEALGSGHYVGGSIRSMAAAALSGLAVRLSRPQGTRGSYGAFCKTLTRTLLTFFDLAWRLRKNFFYFYILASVILNVHLQVYI.

A helical membrane pass occupies residues 64–82; it reads FFYFYILASVILNVHLQVY.

Its subcellular location is the membrane. This Homo sapiens (Human) protein is Small integral membrane protein 10 (SMIM10).